The following is a 104-amino-acid chain: MNNTEFHELVDAKLQLLEDMIDDSGADIEPIITGNVLTLEFENRSQIVINKQEPMHEIWLASKSGGFHFAYTDEKWTCSKTGVEFIEMVKEECQKHADEVIQWA.

The protein belongs to the frataxin family.

Involved in iron-sulfur (Fe-S) cluster assembly. May act as a regulator of Fe-S biogenesis. This Aliivibrio salmonicida (strain LFI1238) (Vibrio salmonicida (strain LFI1238)) protein is Iron-sulfur cluster assembly protein CyaY.